The chain runs to 280 residues: Virginiamycin B lyase (280 aa).

His-215 provides a ligand contact to substrate. Glu-254 contacts Mg(2+). His-256 (proton acceptor) is an active-site residue. Glu-271 serves as a coordination point for Mg(2+).

It belongs to the Vgb family. Monomer. It depends on Mg(2+) as a cofactor.

Inactivates the type B streptogramin antibiotics by linearizing the lactone ring at the ester linkage, generating a free phenylglycine carboxylate and converting the threonyl moiety into 2-amino-butenoic acid. The protein is Virginiamycin B lyase of Mycobacterium sp. (strain KMS).